Here is a 524-residue protein sequence, read N- to C-terminus: Probable metalloreductase AIM14 (524 aa).

The next 7 helical transmembrane spans lie at 24 to 44 (VNIK…VLSI), 69 to 89 (SIPF…LSIF), 104 to 121 (RLGR…FISL), 143 to 163 (WISR…LYKW), 179 to 199 (FLGV…VNVM), 206 to 226 (LFYI…AFHA), and 230 to 250 (VPLL…QRFF). Residues 105-222 (LGRMAYCLVP…VTLWMFVVLI (118 aa)) enclose the Ferric oxidoreductase domain. In terms of domain architecture, FAD-binding FR-type spans 248 to 372 (RFFKSYYLHD…GGSGISFGLP (125 aa)).

The protein belongs to the ferric reductase (FRE) family. AIM14 subfamily.

Its subcellular location is the membrane. In terms of biological role, probable cell surface metalloreductase. May be involved in iron or copper homeostasis. The protein is Probable metalloreductase AIM14 (AIM14) of Scheffersomyces stipitis (strain ATCC 58785 / CBS 6054 / NBRC 10063 / NRRL Y-11545) (Yeast).